The primary structure comprises 490 residues: Limb region 1 protein homolog (490 aa).

Over 1–19 (MEGQDEVSAREQHFHSQVR) the chain is Extracellular. A helical membrane pass occupies residues 20-40 (ESTICFLLFAILYVVSYFIIT). The Cytoplasmic segment spans residues 41 to 62 (RYKRKSDEQEDEDAIVNRISLF). The chain crosses the membrane as a helical span at residues 63 to 83 (LSTFTLAVSAGAVLLLPFSII). Topologically, residues 84–110 (SNEILLSFPQNYYIQWLNGSLIHGLWN) are extracellular. A helical transmembrane segment spans residues 111–131 (LASLFSNLCLFVLMPFAFFFL). Residues 132–151 (ESEGFAGLKKGIRARILETL) lie on the Cytoplasmic side of the membrane. A helical transmembrane segment spans residues 152–172 (VMLLLLALLILGIVWVASALI). Topologically, residues 173–187 (DNDAASMESLYDLWE) are extracellular. The chain crosses the membrane as a helical span at residues 188 to 208 (FYLPYLYSCISLMGCLLLLLC). Residues 209 to 291 (TPVGLSRMFT…RKKASAWERN (83 aa)) are Cytoplasmic-facing. Positions 250–287 (RLNGLSSSVEYNIMELEQELENVKTLKTKLERRKKASA) form a coiled coil. Residues 292 to 312 (LVYPAVMVLLLIETSISVLLV) traverse the membrane as a helical segment. At 313 to 339 (ACNILCLLVDETAMPKGTRGPGIGNAS) the chain is on the extracellular side. The helical transmembrane segment at 340–360 (LSTFGFVGAALEIILIFYLMV) threads the bilayer. At 361 to 383 (SSVVGFYSLRFFGNFTPKKDDTT) the chain is on the cytoplasmic side. A helical membrane pass occupies residues 384–404 (MTKIIGNCVSILVLSSALPVM). At 405-426 (SRTLGITRFDLLGDFGRFNWLG) the chain is on the extracellular side. Residues 427–447 (NFYIVLSYNLLFAIVTTLCLV) traverse the membrane as a helical segment. Over 448–490 (RKFTSAVREELFKALGLHKLHLPNTSRDSETAKPSVNGHQKAL) the chain is Cytoplasmic.

Belongs to the LIMR family. In terms of tissue distribution, widely expressed with strongest expression in heart and pancreas.

The protein resides in the membrane. Putative membrane receptor. This chain is Limb region 1 protein homolog (LMBR1), found in Homo sapiens (Human).